Consider the following 1217-residue polypeptide: Nuclear matrix constituent protein 1 (1217 aa).

The span at methionine 1–lysine 14 shows a compositional bias: polar residues. A disordered region spans residues methionine 1 to asparagine 45. Positions valine 159–glutamate 746 form a coiled coil. The segment covering serine 892–alanine 904 has biased composition (low complexity). 4 disordered regions span residues serine 892–aspartate 969, glutamate 981–proline 1057, valine 1087–threonine 1117, and isoleucine 1152–threonine 1217. Residues serine 947–threonine 960 are compositionally biased toward basic residues. Composition is skewed to polar residues over residues serine 986 to threonine 1007 and valine 1087 to serine 1103. The segment covering glutamate 1173–glycine 1186 has biased composition (low complexity). Residues glycine 1189–glutamate 1200 show a composition bias toward acidic residues.

The protein belongs to the CRWN family.

Its subcellular location is the nucleus matrix. The protein localises to the nucleus lamina. In terms of biological role, architectural component of nuclear structure that plays different roles in controlling nuclear size and morphology. Involved in the organization of multimeric complexes in the peripheral nucleoskeleton. This chain is Nuclear matrix constituent protein 1, found in Allium cepa (Onion).